The primary structure comprises 304 residues: uncharacterized protein (304 aa).

This is an uncharacterized protein from Acanthamoeba polyphaga (Amoeba).